The sequence spans 528 residues: Probable feruloyl esterase B-1 (528 aa).

An N-terminal signal peptide occupies residues 1 to 19; that stretch reads MMWWFLLIGLASAAATASS. Disulfide bonds link Cys29-Cys78, Cys64-Cys117, Cys190-Cys445, Cys259-Cys276, Cys285-Cys295, and Cys505-Cys527. 2 N-linked (GlcNAc...) asparagine glycosylation sites follow: Asn83 and Asn101. Ser191 serves as the catalytic Acyl-ester intermediate. Residues Asp260, Asp263, Ala265, Asp267, and Ile269 each contribute to the Ca(2+) site. N-linked (GlcNAc...) asparagine glycans are attached at residues Asn286, Asn354, and Asn385. Catalysis depends on charge relay system residues Asp404 and His444.

This sequence belongs to the tannase family.

The protein resides in the secreted. It catalyses the reaction feruloyl-polysaccharide + H2O = ferulate + polysaccharide.. Functionally, involved in degradation of plant cell walls. Hydrolyzes the feruloyl-arabinose ester bond in arabinoxylans as well as the feruloyl-galactose and feruloyl-arabinose ester bonds in pectin. The sequence is that of Probable feruloyl esterase B-1 (faeB-1) from Aspergillus fumigatus (strain CBS 144.89 / FGSC A1163 / CEA10) (Neosartorya fumigata).